We begin with the raw amino-acid sequence, 128 residues long: Fluoride-specific ion channel FluC (128 aa).

4 helical membrane passes run 5–25 (IVAI…LSIG), 35–55 (LGTL…VVAF), 67–87 (LFVI…SVEV), and 96–116 (FGWA…LTGL). Residues Gly75 and Thr78 each contribute to the Na(+) site.

This sequence belongs to the fluoride channel Fluc/FEX (TC 1.A.43) family.

It is found in the cell inner membrane. It catalyses the reaction fluoride(in) = fluoride(out). Its activity is regulated as follows. Na(+) is not transported, but it plays an essential structural role and its presence is essential for fluoride channel function. Fluoride-specific ion channel. Important for reducing fluoride concentration in the cell, thus reducing its toxicity. The sequence is that of Fluoride-specific ion channel FluC from Burkholderia thailandensis (strain ATCC 700388 / DSM 13276 / CCUG 48851 / CIP 106301 / E264).